The following is a 362-amino-acid chain: NAD(P)H-quinone oxidoreductase subunit 1, chloroplastic (362 aa).

The next 8 membrane-spanning stretches (helical) occupy residues 27-47, 103-123, 128-148, 164-184, 202-222, 247-267, 303-323, and 342-362; these read IWIL…LVIV, IAVI…HFVL, IGVF…LMAG, AAQS…ISLL, FFGW…ISSL, YSGI…LVSS, VIGI…SITI, and FLLP…LVSL.

It belongs to the complex I subunit 1 family. NDH is composed of at least 16 different subunits, 5 of which are encoded in the nucleus.

It localises to the plastid. Its subcellular location is the chloroplast thylakoid membrane. It catalyses the reaction a plastoquinone + NADH + (n+1) H(+)(in) = a plastoquinol + NAD(+) + n H(+)(out). It carries out the reaction a plastoquinone + NADPH + (n+1) H(+)(in) = a plastoquinol + NADP(+) + n H(+)(out). In terms of biological role, NDH shuttles electrons from NAD(P)H:plastoquinone, via FMN and iron-sulfur (Fe-S) centers, to quinones in the photosynthetic chain and possibly in a chloroplast respiratory chain. The immediate electron acceptor for the enzyme in this species is believed to be plastoquinone. Couples the redox reaction to proton translocation, and thus conserves the redox energy in a proton gradient. The sequence is that of NAD(P)H-quinone oxidoreductase subunit 1, chloroplastic from Saccharum hybrid (Sugarcane).